A 124-amino-acid chain; its full sequence is Small ribosomal subunit protein uS12 (124 aa).

Positions 1–32 are disordered; sequence MPTIQQLVRKGRKDKATKTKTPALKGSPQRRG. Aspartate 89 bears the 3-methylthioaspartic acid mark. A disordered region spans residues 105–124; the sequence is QGVRGRQQARSRYGAKKEKK. Basic residues predominate over residues 111–124; the sequence is QQARSRYGAKKEKK.

It belongs to the universal ribosomal protein uS12 family. Part of the 30S ribosomal subunit. Contacts proteins S8 and S17. May interact with IF1 in the 30S initiation complex.

In terms of biological role, with S4 and S5 plays an important role in translational accuracy. Functionally, interacts with and stabilizes bases of the 16S rRNA that are involved in tRNA selection in the A site and with the mRNA backbone. Located at the interface of the 30S and 50S subunits, it traverses the body of the 30S subunit contacting proteins on the other side and probably holding the rRNA structure together. The combined cluster of proteins S8, S12 and S17 appears to hold together the shoulder and platform of the 30S subunit. This chain is Small ribosomal subunit protein uS12, found in Beutenbergia cavernae (strain ATCC BAA-8 / DSM 12333 / CCUG 43141 / JCM 11478 / NBRC 16432 / NCIMB 13614 / HKI 0122).